The chain runs to 43 residues: Hemolysin H3C (43 aa).

Methionine 1 is modified (N-formylmethionine).

Belongs to the staphylococcal hemolytic protein family.

The protein localises to the secreted. Functionally, virulence factor. Causes hemolysis of erythrocytes from sheep (HD(50)=2.63 mM), rabbit (HD(50)=2.37 mM), guinea pig (HD(50)=1.98 mM), dog (HD(50)=1.02 mM) and human (HD(50)=2.07 mM). Acts synergistically with beta-hemolysins from S.aureus ATCC 25923. Cytotoxic towards human dermal fibroblasts. In Staphylococcus cohnii subsp. cohnii, this protein is Hemolysin H3C.